Consider the following 432-residue polypeptide: Adenylosuccinate synthetase (432 aa).

GTP contacts are provided by residues 13–19 (GDEGKGK) and 41–43 (GHT). Residue D14 is the Proton acceptor of the active site. 2 residues coordinate Mg(2+): D14 and G41. Residues 14–17 (DEGK), 39–42 (NAGH), T130, R144, Q225, T240, and R304 each bind IMP. H42 (proton donor) is an active-site residue. 300–306 (ATTGRRR) contacts substrate. GTP is bound by residues R306, 332 to 334 (KLD), and 415 to 417 (STG).

Belongs to the adenylosuccinate synthetase family. In terms of assembly, homodimer. Requires Mg(2+) as cofactor.

The protein localises to the cytoplasm. The catalysed reaction is IMP + L-aspartate + GTP = N(6)-(1,2-dicarboxyethyl)-AMP + GDP + phosphate + 2 H(+). It functions in the pathway purine metabolism; AMP biosynthesis via de novo pathway; AMP from IMP: step 1/2. Its function is as follows. Plays an important role in the de novo pathway of purine nucleotide biosynthesis. Catalyzes the first committed step in the biosynthesis of AMP from IMP. The polypeptide is Adenylosuccinate synthetase (Salmonella heidelberg (strain SL476)).